The following is an 857-amino-acid chain: DNA mismatch repair protein MutS (857 aa).

608-615 (GPNMSGKS) contributes to the ATP binding site.

Belongs to the DNA mismatch repair MutS family.

Functionally, this protein is involved in the repair of mismatches in DNA. It is possible that it carries out the mismatch recognition step. This protein has a weak ATPase activity. In Lactobacillus johnsonii (strain CNCM I-12250 / La1 / NCC 533), this protein is DNA mismatch repair protein MutS.